Consider the following 808-residue polypeptide: Ribosome biogenesis protein BOP1 homolog (808 aa).

Low complexity-rich tracts occupy residues 1–25 and 33–50; these read MTSPKGKPSPKRSAPAPATAALTPC and ATSSASASASSHISSSFD. The disordered stretch occupies residues 1–55; that stretch reads MTSPKGKPSPKRSAPAPATAALTPCAEERTEGATSSASASASSHISSSFDSPRDD. 5 WD repeats span residues 430–469, 640–680, 682–720, 724–766, and 777–808; these read GHTATVRSVSVSPNGQYLATGCDDHLVRVFEVQTGRLMKR, KFSE…RRFK, SGGVTTCLSIHPEGDNFLVGDTTSHTSWFDMDFSDKPYK, SHKG…DYNK, and KHQRPVYAVAWHPTLAWLFTSTEDGVVTAWTE.

The protein belongs to the WD repeat BOP1/ERB1 family.

The protein resides in the nucleus. It localises to the nucleolus. It is found in the nucleoplasm. Its function is as follows. Required for maturation of ribosomal RNAs and formation of the large ribosomal subunit. The polypeptide is Ribosome biogenesis protein BOP1 homolog (Leishmania major).